A 209-amino-acid polypeptide reads, in one-letter code: Ribosomal RNA large subunit methyltransferase E (209 aa).

Positions 63, 65, 83, 99, and 124 each coordinate S-adenosyl-L-methionine. Residue Lys164 is the Proton acceptor of the active site.

The protein belongs to the class I-like SAM-binding methyltransferase superfamily. RNA methyltransferase RlmE family.

Its subcellular location is the cytoplasm. It catalyses the reaction uridine(2552) in 23S rRNA + S-adenosyl-L-methionine = 2'-O-methyluridine(2552) in 23S rRNA + S-adenosyl-L-homocysteine + H(+). In terms of biological role, specifically methylates the uridine in position 2552 of 23S rRNA at the 2'-O position of the ribose in the fully assembled 50S ribosomal subunit. The protein is Ribosomal RNA large subunit methyltransferase E of Sodalis glossinidius (strain morsitans).